Here is an 873-residue protein sequence, read N- to C-terminus: Zinc fingers and homeoboxes protein 1 (873 aa).

The segment at 1–63 is disordered; the sequence is MASRRKSTTP…ESVDSDNQQN (63 aa). The span at 18-30 shows a compositional bias: acidic residues; it reads QDPDLELISDLEE. Thr36 carries the phosphothreonine modification. A phosphoserine mark is found at Ser45, Ser47, and Ser48. C2H2-type zinc fingers lie at residues 70-93 and 102-125; these read YECK…DSEH and YVCV…LKYH. Lys159 is covalently cross-linked (Glycyl lysine isopeptide (Lys-Gly) (interchain with G-Cter in SUMO2)). The disordered stretch occupies residues 198–247; the sequence is VHHNSAEGTSEEKENGVKASREENAENTSSSASESNTSTSTVNQVHPSPA. Position 202 is a phosphoserine (Ser202). A compositionally biased stretch (basic and acidic residues) spans 207–221; it reads SEEKENGVKASREEN. Low complexity predominate over residues 223 to 238; sequence ENTSSSASESNTSTST. Residues 272 to 432 are required for dimerization; it reads NSNLVPKVLI…QTNVQKSQVP (161 aa). A required for interaction with NFYA region spans residues 272-564; that stretch reads NSNLVPKVLI…SQPKQSWNPF (293 aa). The segment at residues 284–346 is a DNA-binding region (homeobox 1); the sequence is NSIPTYNAAL…LKHGVSWTPE (63 aa). A disordered region spans residues 430–455; it reads QVPAAQPAAETKPATAAVPSSPSVRP. Residues Lys441 and Lys485 each participate in a glycyl lysine isopeptide (Lys-Gly) (interchain with G-Cter in SUMO2) cross-link. Residues 464–526 constitute a DNA-binding region (homeobox 2); sequence SFGIRAKKTK…YNQRNSKSNQ (63 aa). Disordered regions lie at residues 540–568, 627–664, and 731–767; these read IDSS…PDFA, DEKV…TGKI, and SSSL…KRMN. Over residues 551 to 560 the composition is skewed to low complexity; that stretch reads AAAASQPKQS. The segment at residues 569 to 631 is a DNA-binding region (homeobox 3); it reads PQKFKEKTAE…TKALKDEKVE (63 aa). Lys629 is covalently cross-linked (Glycyl lysine isopeptide (Lys-Gly) (interchain with G-Cter in SUMO2)). The residue at position 648 (Ser648) is a Phosphoserine. The homeobox 4 DNA-binding region spans 660–722; it reads GTGKICKKTP…YAWKNGNLKW (63 aa). Residues 734–768 form a required for nuclear localization region; sequence LNGLSSLRKRGRGRPKGRGRGRPRGRPRGGKRMNT. Basic residues predominate over residues 740–764; that stretch reads LRKRGRGRPKGRGRGRPRGRPRGGK. Phosphoserine is present on Ser774. The segment at residues 777-832 is a DNA-binding region (homeobox 5); sequence KFKTGTAILKDYYLKHKFLNEQDLDELVNRSHMGYEQVREWFAERQRRSELGIELF. The disordered stretch occupies residues 829–873; the sequence is IELFEENEEEDEVIDDQEEDEEETDDSDTWEPPRHVKRKLSKSDD. A compositionally biased stretch (acidic residues) spans 831-857; it reads LFEENEEEDEVIDDQEEDEEETDDSDT. The required for repressor activity stretch occupies residues 831–873; it reads LFEENEEEDEVIDDQEEDEEETDDSDTWEPPRHVKRKLSKSDD. Over residues 863-873 the composition is skewed to basic residues; the sequence is HVKRKLSKSDD.

The protein belongs to the ZHX family. As to quaternary structure, forms homodimers. Heterodimer (via HD1 domain) with ZHX2 (via HD1 domain). Also forms a heterodimer with ZHX3 which is a prerequisite for repressor activity. Interacts with ATF7IP and NFYA. Interacts (via homeobox domains) with DNMT3B (via PWWP domain). As to expression, ubiquitously expressed.

The protein resides in the nucleus. Functionally, acts as a transcriptional repressor. Increases DNMT3B-mediated repressive transcriptional activity when DNMT3B is tethered to DNA. May link molecule between DNMT3B and other co-repressor proteins. The protein is Zinc fingers and homeoboxes protein 1 (Zhx1) of Rattus norvegicus (Rat).